The sequence spans 706 residues: K(+)-insensitive pyrophosphate-energized proton pump (706 aa).

The next 5 helical transmembrane spans lie at 1-21 (MTAL…AIWA), 62-82 (IVIF…GFAI), 83-103 (GAIL…RANV), 128-148 (GMLV…FLVY), and 164-184 (VALG…GGIF). Residue Lys-186 participates in substrate binding. 4 residues coordinate Mg(2+): Asp-189, Asp-193, Asn-216, and Asp-219. The next 6 helical transmembrane spans lie at 231-251 (LFET…IFFA), 261-281 (TLPL…TFFV), 298-318 (IATG…LIGF), 328-348 (GMSL…IIWI), 376-398 (IQGL…AGIL), and 412-432 (ATAT…FGPV). Mg(2+) is bound at residue Asp-434. 4 helical membrane passes run 465 to 485 (AVTK…LFAA), 516 to 536 (YVVV…AMGM), 585 to 605 (IIPS…IYAI), and 616 to 636 (AFSA…FVAI). Residues Asp-646, Asp-672, and Asp-676 each coordinate Ca(2+). Substrate is bound at residue Lys-679. A helical transmembrane segment spans residues 685-705 (AVNPMIKITNIVALLLLAILA).

The protein belongs to the H(+)-translocating pyrophosphatase (TC 3.A.10) family. K(+)-insensitive subfamily. Homodimer. Mg(2+) serves as cofactor.

The protein localises to the cell inner membrane. The enzyme catalyses diphosphate + H2O + H(+)(in) = 2 phosphate + 2 H(+)(out). Functionally, proton pump that utilizes the energy of pyrophosphate hydrolysis as the driving force for proton movement across the membrane. Generates a proton motive force. The protein is K(+)-insensitive pyrophosphate-energized proton pump of Bradyrhizobium diazoefficiens (strain JCM 10833 / BCRC 13528 / IAM 13628 / NBRC 14792 / USDA 110).